We begin with the raw amino-acid sequence, 1044 residues long: Integrin alpha-8 (1044 aa).

The first 23 residues, 1–23 (MPRRQPPRPLLLLSALLCAPASA), serve as a signal peptide directing secretion. Residues 24-991 (FNLDEEKLTV…WSTPNVSFVI (968 aa)) lie on the Extracellular side of the membrane. FG-GAP repeat units lie at residues 28–90 (EEKL…RCRQ), 104–165 (NGTR…AYAE), 170–222 (RNSN…ITNY), 236–288 (QTGV…SSDL), 289–354 (TFIQ…FLFR), 355–413 (DPQI…GLKT), and 417–480 (QVLN…LNPM). Residue asparagine 66 is glycosylated (N-linked (GlcNAc...) asparagine). Cysteines 81 and 88 form a disulfide. Asparagine 104 carries N-linked (GlcNAc...) asparagine glycosylation. A disulfide bridge connects residues cysteine 132 and cysteine 153. The N-linked (GlcNAc...) asparagine glycan is linked to asparagine 159. Cysteine 169 and cysteine 182 form a disulfide bridge. An N-linked (GlcNAc...) asparagine glycan is attached at asparagine 221. Positions 257, 259, 261, and 265 each coordinate Ca(2+). N-linked (GlcNAc...) asparagine glycosylation is found at asparagine 284 and asparagine 293. Ca(2+) is bound by residues aspartate 311, asparagine 313, aspartate 315, leucine 317, aspartate 319, aspartate 377, asparagine 379, aspartate 381, tyrosine 383, and aspartate 385. Positions 437 to 439 (RGD) match the Cell attachment site motif. Residues aspartate 441, aspartate 443, asparagine 445, tyrosine 447, and aspartate 449 each contribute to the Ca(2+) site. An N-linked (GlcNAc...) asparagine glycan is attached at asparagine 486. 2 disulfides stabilise this stretch: cysteine 489–cysteine 500 and cysteine 506–cysteine 562. Asparagine 587 carries an N-linked (GlcNAc...) asparagine glycan. Cystine bridges form between cysteine 623/cysteine 629 and cysteine 695/cysteine 708. Asparagine 701, asparagine 719, asparagine 751, asparagine 762, asparagine 818, asparagine 877, and asparagine 904 each carry an N-linked (GlcNAc...) asparagine glycan. Cystine bridges form between cysteine 849/cysteine 905 and cysteine 910/cysteine 915. 2 N-linked (GlcNAc...) asparagine glycosylation sites follow: asparagine 952 and asparagine 986. The helical transmembrane segment at 992-1015 (PLWVIILAIMLGLLVLAVLTLALW) threads the bilayer. The Cytoplasmic portion of the chain corresponds to 1016–1044 (KCGFFDRARPPQDDMADREQLTNNKTTDA).

This sequence belongs to the integrin alpha chain family. In terms of assembly, heterodimer of an alpha and a beta subunit. The alpha subunit is composed of a heavy and a light chain linked by a disulfide bond. Alpha-8 associates with beta-1. Prominently expressed on axons and on cells in contact with basal laminae in embryos.

It is found in the membrane. The protein localises to the cell membrane. Its function is as follows. Integrin alpha-8/beta-1 functions in the genesis of kidney and probably of other organs by regulating the recruitment of mesenchymal cells into epithelial structures. It recognizes the sequence R-G-D in a wide array of ligands including TNC, FN1, SPP1, TGFB1, TGFB3 and VTN. NPNT is probably its functional ligand in kidney genesis. Neuronal receptor for TNC it mediates cell-cell interactions and regulates neurite outgrowth of sensory and motor neurons. This is Integrin alpha-8 (ITGA8) from Gallus gallus (Chicken).